A 68-amino-acid chain; its full sequence is Preprofallaxidin-5 (68 aa).

Positions 1–22 (MASLKKSLFLVLFLGFVSLSIC) are cleaved as a signal peptide. Positions 23–51 (EEEKREDKEDEGENEEAEENHEERSEEKR) are excised as a propeptide. A disordered region spans residues 24 to 50 (EEKREDKEDEGENEEAEENHEERSEEK). Positions 30-42 (KEDEGENEEAEEN) are enriched in acidic residues. Leu64 is subject to Leucine amide. A propeptide is located at residue Ser68.

It belongs to the frog skin active peptide (FSAP) family. Brevinin subfamily. In terms of tissue distribution, expressed by the skin glands.

It localises to the secreted. This chain is Preprofallaxidin-5, found in Litoria fallax (Eastern dwarf tree frog).